Here is a 623-residue protein sequence, read N- to C-terminus: Chaperone protein HtpG (623 aa).

The tract at residues 1–341 is a; substrate-binding; that stretch reads MEKREFKAES…SQDLSLNISR (341 aa). The interval 342 to 549 is b; that stretch reads EMLQHDRQLS…EGEVSIEMEK (208 aa). The interval 550-623 is c; sequence ILSAMPNNQG…FTNDICKLMK (74 aa).

This sequence belongs to the heat shock protein 90 family. Homodimer.

The protein localises to the cytoplasm. Molecular chaperone. Has ATPase activity. The sequence is that of Chaperone protein HtpG from Clostridium perfringens (strain 13 / Type A).